A 440-amino-acid chain; its full sequence is Thymidine phosphorylase (440 aa).

This sequence belongs to the thymidine/pyrimidine-nucleoside phosphorylase family. Homodimer.

It catalyses the reaction thymidine + phosphate = 2-deoxy-alpha-D-ribose 1-phosphate + thymine. The protein operates within pyrimidine metabolism; dTMP biosynthesis via salvage pathway; dTMP from thymine: step 1/2. The enzymes which catalyze the reversible phosphorolysis of pyrimidine nucleosides are involved in the degradation of these compounds and in their utilization as carbon and energy sources, or in the rescue of pyrimidine bases for nucleotide synthesis. This is Thymidine phosphorylase from Yersinia pestis.